Consider the following 155-residue polypeptide: Protein-export protein SecB (155 aa).

Belongs to the SecB family. In terms of assembly, homotetramer, a dimer of dimers. One homotetramer interacts with 1 SecA dimer.

The protein localises to the cytoplasm. Its function is as follows. One of the proteins required for the normal export of preproteins out of the cell cytoplasm. It is a molecular chaperone that binds to a subset of precursor proteins, maintaining them in a translocation-competent state. It also specifically binds to its receptor SecA. The polypeptide is Protein-export protein SecB (Vibrio atlanticus (strain LGP32) (Vibrio splendidus (strain Mel32))).